We begin with the raw amino-acid sequence, 210 residues long: Orotate phosphoribosyltransferase (210 aa).

Residues arginine 94, lysine 98, histidine 100, and 120-128 (EDLISTGGS) contribute to the 5-phospho-alpha-D-ribose 1-diphosphate site. Serine 124 is an orotate binding site.

Belongs to the purine/pyrimidine phosphoribosyltransferase family. PyrE subfamily. In terms of assembly, homodimer. The cofactor is Mg(2+).

It carries out the reaction orotidine 5'-phosphate + diphosphate = orotate + 5-phospho-alpha-D-ribose 1-diphosphate. Its pathway is pyrimidine metabolism; UMP biosynthesis via de novo pathway; UMP from orotate: step 1/2. In terms of biological role, catalyzes the transfer of a ribosyl phosphate group from 5-phosphoribose 1-diphosphate to orotate, leading to the formation of orotidine monophosphate (OMP). The sequence is that of Orotate phosphoribosyltransferase from Bacillus cereus (strain G9842).